We begin with the raw amino-acid sequence, 351 residues long: Probable cell division control protein 7 homolog 2 (351 aa).

In terms of domain architecture, Protein kinase spans 21-341 (YTPIEKIGEG…ASDALSHPFF (321 aa)). ATP-binding positions include 27–35 (IGEGSFSVV) and K50. D137 serves as the catalytic Proton acceptor.

Belongs to the protein kinase superfamily. Ser/Thr protein kinase family. CDC7 subfamily. The cofactor is Mg(2+).

The enzyme catalyses L-seryl-[protein] + ATP = O-phospho-L-seryl-[protein] + ADP + H(+). The catalysed reaction is L-threonyl-[protein] + ATP = O-phospho-L-threonyl-[protein] + ADP + H(+). Serine/threonine-protein kinase. Needed for the initiation of DNA synthesis during mitosis as well as for synaptonemal complex formation and commitment to recombination during meiosis. The polypeptide is Probable cell division control protein 7 homolog 2 (CDC7-2) (Encephalitozoon cuniculi (strain GB-M1) (Microsporidian parasite)).